Consider the following 157-residue polypeptide: MSMKTKAAFHLVLFGLACWALISYFEASEGIASFFGTKSGGMVFDLNLTPFILFVAASAVYLYLQKKSRPARKQLLLPDEFEEQDEREQMMTAKACRASYIAVYFSLPAAAVLLIFYPLFQSRIPFFPIIIVFIIMIIQHLSYVISFKKNEKNSGAL.

The signal sequence occupies residues Met1 to Ala17. A lipid anchor (N-palmitoyl cysteine) is attached at Cys18. A lipid anchor (S-diacylglycerol cysteine) is attached at Cys18. The next 3 membrane-spanning stretches (helical) occupy residues Met42–Leu64, Ala98–Phe120, and Ile124–Ser146.

It is found in the cell membrane. This is an uncharacterized protein from Bacillus subtilis (strain 168).